Reading from the N-terminus, the 634-residue chain is 1-deoxy-D-xylulose-5-phosphate synthase (634 aa).

Thiamine diphosphate is bound by residues H72 and 113 to 115 (GHS). Residue D144 participates in Mg(2+) binding. Residues 145–146 (GA), N173, Y284, and E367 contribute to the thiamine diphosphate site. N173 provides a ligand contact to Mg(2+).

The protein belongs to the transketolase family. DXPS subfamily. Homodimer. The cofactor is Mg(2+). Thiamine diphosphate serves as cofactor.

It carries out the reaction D-glyceraldehyde 3-phosphate + pyruvate + H(+) = 1-deoxy-D-xylulose 5-phosphate + CO2. It functions in the pathway metabolic intermediate biosynthesis; 1-deoxy-D-xylulose 5-phosphate biosynthesis; 1-deoxy-D-xylulose 5-phosphate from D-glyceraldehyde 3-phosphate and pyruvate: step 1/1. In terms of biological role, catalyzes the acyloin condensation reaction between C atoms 2 and 3 of pyruvate and glyceraldehyde 3-phosphate to yield 1-deoxy-D-xylulose-5-phosphate (DXP). This Listeria welshimeri serovar 6b (strain ATCC 35897 / DSM 20650 / CCUG 15529 / CIP 8149 / NCTC 11857 / SLCC 5334 / V8) protein is 1-deoxy-D-xylulose-5-phosphate synthase.